A 263-amino-acid polypeptide reads, in one-letter code: Small ribosomal subunit protein eS4, Y isoform 2 (263 aa).

In terms of domain architecture, S4 RNA-binding spans 42–104; the sequence is LPLIVFLRNR…TGEHFRLVYN (63 aa).

It belongs to the eukaryotic ribosomal protein eS4 family.

In Homo sapiens (Human), this protein is Small ribosomal subunit protein eS4, Y isoform 2 (RPS4Y2).